A 302-amino-acid polypeptide reads, in one-letter code: tRNA pseudouridine synthase B (302 aa).

Asp45 functions as the Nucleophile in the catalytic mechanism.

Belongs to the pseudouridine synthase TruB family. Type 1 subfamily.

The enzyme catalyses uridine(55) in tRNA = pseudouridine(55) in tRNA. Functionally, responsible for synthesis of pseudouridine from uracil-55 in the psi GC loop of transfer RNAs. This chain is tRNA pseudouridine synthase B, found in Francisella tularensis subsp. tularensis (strain WY96-3418).